Consider the following 458-residue polypeptide: Alpha-glucosides-binding periplasmic protein AglE (458 aa).

Residues 1-27 (MKRSLLIGVAAFALLAGTAGLAGTAGA) form the signal peptide.

This sequence belongs to the bacterial solute-binding protein 1 family.

Its subcellular location is the periplasm. Its function is as follows. Part of the binding-protein-dependent transport system for alpha-glucosides such as sucrose, maltose and trehalose. The protein is Alpha-glucosides-binding periplasmic protein AglE (aglE) of Rhizobium meliloti (strain 1021) (Ensifer meliloti).